The sequence spans 218 residues: Cytochrome b6 (218 aa).

Residues 35 to 55 (IFYCLGGITLVCFLIQFATGF) form a helical membrane-spanning segment. Cysteine 38 contacts heme c. Residues histidine 89 and histidine 103 each coordinate heme b. Helical transmembrane passes span 93–113 (ASMMVLMLILHVFRVYLTGGF), 119–139 (LTWITGVVMAVITVAFGVTGY), and 189–209 (LHTFVMPWLLAVFMLMHFLMI). Residues histidine 190 and histidine 205 each contribute to the heme b site.

Belongs to the cytochrome b family. PetB subfamily. As to quaternary structure, the 4 large subunits of the cytochrome b6-f complex are cytochrome b6, subunit IV (17 kDa polypeptide, PetD), cytochrome f and the Rieske protein, while the 4 small subunits are PetG, PetL, PetM and PetN. The complex functions as a dimer. The cofactor is heme b. Heme c is required as a cofactor.

Its subcellular location is the cellular thylakoid membrane. In terms of biological role, component of the cytochrome b6-f complex, which mediates electron transfer between photosystem II (PSII) and photosystem I (PSI), cyclic electron flow around PSI, and state transitions. The chain is Cytochrome b6 from Prochlorococcus marinus (strain NATL1A).